Here is a 103-residue protein sequence, read N- to C-terminus: Large ribosomal subunit protein bL21 (103 aa).

Belongs to the bacterial ribosomal protein bL21 family. Part of the 50S ribosomal subunit. Contacts protein L20.

In terms of biological role, this protein binds to 23S rRNA in the presence of protein L20. The polypeptide is Large ribosomal subunit protein bL21 (Burkholderia mallei (strain NCTC 10247)).